Here is a 333-residue protein sequence, read N- to C-terminus: Probable G-protein coupled receptor 33 (333 aa).

Topologically, residues 1 to 30 are extracellular; the sequence is MDLINSTDYLINASTLVRNSTQFLAPASKM. N-linked (GlcNAc...) asparagine glycans are attached at residues Asn-5, Asn-12, and Asn-19. Residues 31-53 traverse the membrane as a helical segment; it reads IIALSLYISSIIGTITNGLYLWV. Residues 54-64 are Cytoplasmic-facing; the sequence is LRFKMKQTVNT. The chain crosses the membrane as a helical span at residues 65-86; it reads LLFFHLILSYFISTMILPFMAT. Residues 87 to 103 lie on the Extracellular side of the membrane; it reads SQLQDNHWNFGTALCKV. The cysteines at positions 101 and 179 are disulfide-linked. A helical transmembrane segment spans residues 104-124; it reads FNGTLSLGMFTSVFFLSAIGL. The Cytoplasmic portion of the chain corresponds to 125-143; it reads DRYLLTLHPVWSQQHRTPR. Residues 144 to 165 traverse the membrane as a helical segment; the sequence is WASSIVLGVWISAAALSIPYLI. Residues 166 to 209 are Extracellular-facing; sequence FRETHHDRKGKVTCQNNYAVSTNWESKEMQASRQWIHVACFISR. Residues 210–230 form a helical membrane-spanning segment; that stretch reads FLLGFLLPFFIIIFCYERVAS. Over 231–246 the chain is Cytoplasmic; that stretch reads KVKERSLFKSSKPFKV. The chain crosses the membrane as a helical span at residues 247-268; sequence MMTAIISFFVCWMPYHIHQGLL. The Extracellular portion of the chain corresponds to 269–283; it reads LTTNQSLLLELTLIL. A glycan (N-linked (GlcNAc...) asparagine) is linked at Asn-272. A helical membrane pass occupies residues 284–303; the sequence is TVLTTSFNTIFSPTLYLFVG. Over 304-333 the chain is Cytoplasmic; it reads ENFKKVFKKSILALFESTFSEDSSVERTQT.

The protein belongs to the G-protein coupled receptor 1 family. In terms of tissue distribution, expressed in spleen, lung, heart, liver, kidney, pancreas, thymus, gonads and leukocytes.

The protein localises to the cell membrane. Functionally, orphan receptor; could be a chemoattractant receptor. This chain is Probable G-protein coupled receptor 33 (GPR33), found in Homo sapiens (Human).